We begin with the raw amino-acid sequence, 214 residues long: Urease accessory protein UreG 2 (214 aa).

22-29 (GPVGSGKT) contributes to the GTP binding site.

This sequence belongs to the SIMIBI class G3E GTPase family. UreG subfamily. In terms of assembly, homodimer. UreD, UreF and UreG form a complex that acts as a GTP-hydrolysis-dependent molecular chaperone, activating the urease apoprotein by helping to assemble the nickel containing metallocenter of UreC. The UreE protein probably delivers the nickel.

The protein resides in the cytoplasm. Its function is as follows. Facilitates the functional incorporation of the urease nickel metallocenter. This process requires GTP hydrolysis, probably effectuated by UreG. The polypeptide is Urease accessory protein UreG 2 (Bradyrhizobium sp. (strain BTAi1 / ATCC BAA-1182)).